A 525-amino-acid polypeptide reads, in one-letter code: Averantin hydroxylase (525 aa).

A helical transmembrane segment spans residues 36-56 (VLATFVAGIGALLLWTLTTVF). A glycan (N-linked (GlcNAc...) asparagine) is linked at N315. Heme is bound at residue C462.

This sequence belongs to the cytochrome P450 family. Requires heme as cofactor.

The protein localises to the membrane. The catalysed reaction is (1'S)-averantin + reduced [NADPH--hemoprotein reductase] + O2 = (1'S,5'R)-5'-hydroxyaverantin + oxidized [NADPH--hemoprotein reductase] + H2O. The enzyme catalyses (1'S)-averantin + reduced [NADPH--hemoprotein reductase] + O2 = (1'S,5'S)-5'-hydroxyaverantin + oxidized [NADPH--hemoprotein reductase] + H2O + H(+). It participates in mycotoxin biosynthesis. Functionally, averantin hydroxylase; part of the fragmented gene cluster that mediates the biosynthesis of dothistromin (DOTH), a polyketide toxin very similar in structure to the aflatoxin precursor, versicolorin B. The first step of the pathway is the conversion of acetate to norsolorinic acid (NOR) and requires the fatty acid synthase subunits hexA and hexB, as well as the polyketide synthase pksA. PksA combines a hexanoyl starter unit and 7 malonyl-CoA extender units to synthesize the precursor NOR. The hexanoyl starter unit is provided to the acyl-carrier protein (ACP) domain by the fungal fatty acid synthase hexA/hexB. The second step is the conversion of NOR to averantin (AVN) and requires the norsolorinic acid ketoreductase nor1, which catalyzes the dehydration of norsolorinic acid to form (1'S)-averantin. The cytochrome P450 monooxygenase avnA then catalyzes the hydroxylation of AVN to 5'hydroxyaverantin (HAVN). The next step is performed by adhA that transforms HAVN to averufin (AVF). Averufin might then be converted to hydroxyversicolorone by cypX and avfA. Hydroxyversicolorone is further converted versiconal hemiacetal acetate (VHA) by moxY. VHA is then the substrate for the versiconal hemiacetal acetate esterase est1 to yield versiconal (VAL). Versicolorin B synthase vbsA then converts VAL to versicolorin B (VERB) by closing the bisfuran ring. Then, the activity of the versicolorin B desaturase verB leads to versicolorin A (VERA). DotB, a predicted chloroperoxidase, may perform epoxidation of the A-ring of VERA. Alternatively, a cytochrome P450, such as cypX or avnA could catalyze this step. It is also possible that another, uncharacterized, cytochrome P450 enzyme is responsible for this step. Opening of the epoxide could potentially be achieved by the epoxide hydrolase epoA. However, epoA seems not to be required for DOTH biosynthesis, but other epoxide hydrolases may have the ability to complement this hydrolysis. Alternatively, opening of the epoxide ring could be achieved non-enzymatically. The next step is the deoxygenation of ring A to yield the 5,8-dihydroxyanthraquinone which is most likely catalyzed by the NADPH dehydrogenase encoded by ver1. The last stages of DOTH biosynthesis are proposed to involve hydroxylation of the bisfuran. OrdB and norB might have oxidative roles here. An alternative possibility is that cytochrome P450 monoogenases such as avnA and cypX might perform these steps in addition to previously proposed steps. The polypeptide is Averantin hydroxylase (Dothistroma septosporum (strain NZE10 / CBS 128990) (Red band needle blight fungus)).